A 292-amino-acid chain; its full sequence is 33 kDa chaperonin (292 aa).

2 cysteine pairs are disulfide-bonded: C230-C232 and C263-C266.

Belongs to the HSP33 family. Post-translationally, under oxidizing conditions two disulfide bonds are formed involving the reactive cysteines. Under reducing conditions zinc is bound to the reactive cysteines and the protein is inactive.

It localises to the cytoplasm. Its function is as follows. Redox regulated molecular chaperone. Protects both thermally unfolding and oxidatively damaged proteins from irreversible aggregation. Plays an important role in the bacterial defense system toward oxidative stress. In Shigella boydii serotype 4 (strain Sb227), this protein is 33 kDa chaperonin.